Consider the following 112-residue polypeptide: MYB-like transcription factor ETC2 (112 aa).

One can recognise a Myb-like domain in the interval 41–78 (TEQEEDLISRMYRLVGNRWDLIAGRVVGRKANEIERYW).

In terms of assembly, interacts with GL3. As to expression, expressed in stomatal guard mother cells, young stomata and trichomes of young leaves, and inflorescences.

The protein resides in the nucleus. Its function is as follows. MYB-type transcription factor involved in epidermal cell fate specification. Acts as a negative regulator of trichome development, by mediating lateral inhibition. Promotes the formation of hair developing cells in H position in root epidermis, probably by inhibiting non-hair cell formation. This is MYB-like transcription factor ETC2 (ETC2) from Arabidopsis thaliana (Mouse-ear cress).